The following is a 573-amino-acid chain: Urease subunit alpha (573 aa).

The Ni(2+) site is built by His-139, His-141, and Lys-222. Lys-222 bears the N6-carboxylysine mark. A substrate-binding site is contributed by His-224. Ni(2+) contacts are provided by His-251 and His-277. His-325 (proton donor) is an active-site residue. Asp-365 lines the Ni(2+) pocket.

Belongs to the metallo-dependent hydrolases superfamily. Urease alpha subunit family. As to quaternary structure, heterotrimer of UreA (gamma), UreB (beta) and UreC (alpha) subunits. Three heterotrimers associate to form the active enzyme. It depends on Ni cation as a cofactor. Carboxylation allows a single lysine to coordinate two nickel ions.

It localises to the cytoplasm. The enzyme catalyses urea + 2 H2O + H(+) = hydrogencarbonate + 2 NH4(+). The protein operates within nitrogen metabolism; urea degradation; CO(2) and NH(3) from urea (urease route): step 1/1. The sequence is that of Urease subunit alpha from Flavobacterium johnsoniae (strain ATCC 17061 / DSM 2064 / JCM 8514 / BCRC 14874 / CCUG 350202 / NBRC 14942 / NCIMB 11054 / UW101) (Cytophaga johnsonae).